Consider the following 184-residue polypeptide: Holliday junction branch migration complex subunit RuvA (184 aa).

The segment at 1 to 61 is domain I; the sequence is MIAALRGNIF…ENEYTLYGFA (61 aa). Residues 62-135 form a domain II region; the sequence is DKNEKKLFDS…GEFEVVFEEQ (74 aa). A region of interest (flexible linker) is located at residue Gln135. The interval 135–184 is domain III; the sequence is QNPVFNQALSALESLGFNKNDIVKALNGIKSDNLEETIKLALKKLSKDIK.

It belongs to the RuvA family. As to quaternary structure, homotetramer. Forms an RuvA(8)-RuvB(12)-Holliday junction (HJ) complex. HJ DNA is sandwiched between 2 RuvA tetramers; dsDNA enters through RuvA and exits via RuvB. An RuvB hexamer assembles on each DNA strand where it exits the tetramer. Each RuvB hexamer is contacted by two RuvA subunits (via domain III) on 2 adjacent RuvB subunits; this complex drives branch migration. In the full resolvosome a probable DNA-RuvA(4)-RuvB(12)-RuvC(2) complex forms which resolves the HJ.

The protein resides in the cytoplasm. The RuvA-RuvB-RuvC complex processes Holliday junction (HJ) DNA during genetic recombination and DNA repair, while the RuvA-RuvB complex plays an important role in the rescue of blocked DNA replication forks via replication fork reversal (RFR). RuvA specifically binds to HJ cruciform DNA, conferring on it an open structure. The RuvB hexamer acts as an ATP-dependent pump, pulling dsDNA into and through the RuvAB complex. HJ branch migration allows RuvC to scan DNA until it finds its consensus sequence, where it cleaves and resolves the cruciform DNA. This chain is Holliday junction branch migration complex subunit RuvA, found in Nautilia profundicola (strain ATCC BAA-1463 / DSM 18972 / AmH).